The following is a 105-amino-acid chain: MAEWSGEYISPYAEHGKKSEQVKKITVSIPLKVLKILTDERTRRQVNNLRHATNSELLCEAFLHAFTGQPLPNDEDLRKERSDEIPEAAKAIMRELGIDPDTWEY.

It belongs to the MetJ family. In terms of assembly, homodimer.

The protein resides in the cytoplasm. Functionally, this regulatory protein, when combined with SAM (S-adenosylmethionine) represses the expression of the methionine regulon and of enzymes involved in SAM synthesis. This chain is Met repressor, found in Klebsiella pneumoniae subsp. pneumoniae (strain ATCC 700721 / MGH 78578).